An 862-amino-acid chain; its full sequence is DNA mismatch repair protein MutS (862 aa).

An ATP-binding site is contributed by 608–615 (GPNMAGKS).

It belongs to the DNA mismatch repair MutS family.

In terms of biological role, this protein is involved in the repair of mismatches in DNA. It is possible that it carries out the mismatch recognition step. This protein has a weak ATPase activity. The chain is DNA mismatch repair protein MutS from Borreliella afzelii (strain PKo) (Borrelia afzelii).